Here is a 126-residue protein sequence, read N- to C-terminus: Arginine decarboxylase proenzyme (126 aa).

Serine 74 acts as the Schiff-base intermediate with substrate; via pyruvic acid in catalysis. Serine 74 carries the post-translational modification Pyruvic acid (Ser); by autocatalysis. Catalysis depends on histidine 79, which acts as the Proton acceptor; for processing activity. Cysteine 94 (proton donor; for catalytic activity) is an active-site residue.

This sequence belongs to the prokaryotic AdoMetDC family. Type 1 subfamily. In terms of assembly, heterooctamer of four alpha and four beta chains arranged as a tetramer of alpha/beta heterodimers. It depends on pyruvate as a cofactor. Is synthesized initially as an inactive proenzyme. Formation of the active enzyme involves a self-maturation process in which the active site pyruvoyl group is generated from an internal serine residue via an autocatalytic post-translational modification. Two non-identical subunits are generated from the proenzyme in this reaction, and the pyruvate is formed at the N-terminus of the alpha chain, which is derived from the carboxyl end of the proenzyme. The post-translation cleavage follows an unusual pathway, termed non-hydrolytic serinolysis, in which the side chain hydroxyl group of the serine supplies its oxygen atom to form the C-terminus of the beta chain, while the remainder of the serine residue undergoes an oxidative deamination to produce ammonia and the pyruvoyl group blocking the N-terminus of the alpha chain.

It catalyses the reaction L-arginine + H(+) = agmatine + CO2. Its pathway is amine and polyamine biosynthesis; agmatine biosynthesis; agmatine from L-arginine: step 1/1. In terms of biological role, specifically catalyzes the decarboxylation of L-arginine to agmatine. Has no S-adenosylmethionine decarboxylase (AdoMetDC) activity. The polypeptide is Arginine decarboxylase proenzyme (Pyrobaculum neutrophilum (strain DSM 2338 / JCM 9278 / NBRC 100436 / V24Sta) (Thermoproteus neutrophilus)).